The sequence spans 291 residues: Beta-lactamase Toho-1 (291 aa).

The first 29 residues, 1–29 (MMTQSIRRSMLTVMATLPLLFSSATLHAQ), serve as a signal peptide directing secretion. Ser73 serves as the catalytic Acyl-ester intermediate. 237 to 239 (KTG) is a binding site for substrate.

It belongs to the class-A beta-lactamase family. Monomer.

It catalyses the reaction a beta-lactam + H2O = a substituted beta-amino acid. In terms of biological role, has strong cefotaxime-hydrolyzing activity. In Escherichia coli, this protein is Beta-lactamase Toho-1 (bla).